A 788-amino-acid polypeptide reads, in one-letter code: Protocadherin beta-18 (788 aa).

The signal sequence occupies residues 1–28 (MEPGKGRAQPTRQVLLFFVFLGGSLVYS). Cadherin domains follow at residues 29–133 (ETWS…TPTF), 134–242 (LNNH…APEF), 243–347 (EKPV…PPEI), 348–452 (AMTS…APAF), and 453–562 (TQTS…SPFV). Over 29 to 691 (ETWSYSIAEE…AQADSLTVYL (663 aa)) the chain is Extracellular. Asn-169 carries N-linked (GlcNAc...) asparagine glycosylation. N-linked (GlcNAc...) asparagine glycans are attached at residues Asn-419 and Asn-437. N-linked (GlcNAc...) asparagine glycosylation is present at Asn-568. The 104-residue stretch at 569–672 (GSAPCTELVP…LVDGFSQPYL (104 aa)) folds into the Cadherin 6 domain. Residues 692–712 (VVALASVSSLFLFSVFLFVAV) form a helical membrane-spanning segment. Residues 713–788 (RLCRRSRAAS…DSDMEKAPPF (76 aa)) are Cytoplasmic-facing.

The protein resides in the cell membrane. Potential calcium-dependent cell-adhesion protein. In Pan troglodytes (Chimpanzee), this protein is Protocadherin beta-18 (PCDHB18).